Consider the following 254-residue polypeptide: MKKVTLFLFVVSLLPSTVLAWNTPGEDFSGELKLEGAVTSTRNPWVWKVGQGNESLEVKQSRGVRDGEQGIPVALPALTVLLGKTTLTTPAGREGLSPGVSYGKGAEGFSLEWTAPGMAKVTLPVTGDKNVRAGTFTFRMQAAGVLRHMQDGQPVYTGVYDDLNANGLPGESTAMKTSDIPGTLQTMFSGEGPSWLQTMTVSGYSGVSHFSDASLRQVEGVYGAQIVAGGGELHLNGAMPERWRVSLPVSIEYQ.

The N-terminal stretch at 1 to 20 (MKKVTLFLFVVSLLPSTVLA) is a signal peptide.

This sequence belongs to the fimbrial K88 protein family.

The protein localises to the fimbrium. K88 minor fimbrial subunit, plays an essential role in the biogenesis of the K88 fimbriae. Fimbriae (also called pili), are polar filaments radiating from the surface of the bacterium to a length of 0.5-1.5 micrometers and numbering 100-300 per cell. They enable bacteria to colonize the epithelium of specific host organs. The chain is K88 minor fimbrial subunit FaeI (faeI) from Escherichia coli.